The primary structure comprises 120 residues: MASPKETLQRRAARVRRQVKAVANGRPRLSVHRSSKNIYVQVIDDVRGVTIAAASTLDGDLKGKLKTGADSAAAAAVGKLVAERAVKAGVSEVVFDRGAFIYHGRVKALAEAAREGGLSF.

Belongs to the universal ribosomal protein uL18 family. Part of the 50S ribosomal subunit; part of the 5S rRNA/L5/L18/L25 subcomplex. Contacts the 5S and 23S rRNAs.

In terms of biological role, this is one of the proteins that bind and probably mediate the attachment of the 5S RNA into the large ribosomal subunit, where it forms part of the central protuberance. The polypeptide is Large ribosomal subunit protein uL18 (Brucella anthropi (strain ATCC 49188 / DSM 6882 / CCUG 24695 / JCM 21032 / LMG 3331 / NBRC 15819 / NCTC 12168 / Alc 37) (Ochrobactrum anthropi)).